The following is a 555-amino-acid chain: MAKFVFVTGGVVSSIGKGIVAASLGRLLKSKGYSVSILKLDPYLNVDPGTMSPFQHGEVFVTEDGAETDLDLGHYERFTDTAMSRLNSVTTGSIYQAVINKERRGDYDGRTVQVIPHITREIRERIKRVANNSGADVVISEIGGTVGDIESLPFLEAIREFKGDVKRNDVVYVHVTLLPYIGTSGEIKTKPTQHSVKELRSIGIQPDILVCRSDRPINDELKNKIGGFCGVNSEAVIASLDADSIYSVPLALKDEGLCKEVLDCLDLNDHESDLKDWERLVHKLRNPGPSVKVALVGKYVQLNDAYLSVVEALRHACISHDASLDLHWINAENIESEGAEKLLQGMDAIVVPGGFGNRGVNGKIAAIRWAREQRVPFLGLCLGMQCAVIEWARNIAGLEDASSAELNPNSKHPVIHLLPEQQDVVDLGGTMRLGVYPCRLQANTTGQSLYNEEVVYERHRHRYEFNNSYRTLLMESGYVISGTSPDGRLVELIELKNHPFFIACQYHPEFLSRPGKPHPLFGGLIQAAQIRVPSSPSEAFNPQSKIIEKKSLEQQ.

An amidoligase domain region spans residues 1 to 267 (MAKFVFVTGG…CKEVLDCLDL (267 aa)). A CTP-binding site is contributed by Ser-13. Ser-13 contributes to the UTP binding site. ATP-binding positions include 14 to 19 (SIGKGI) and Asp-71. Mg(2+) contacts are provided by Asp-71 and Glu-141. CTP is bound by residues 148-150 (DIE), 188-193 (KTKPTQ), and Lys-224. UTP is bound by residues 188-193 (KTKPTQ) and Lys-224. Residues 292 to 534 (KVALVGKYVQ…IQAAQIRVPS (243 aa)) enclose the Glutamine amidotransferase type-1 domain. Gly-354 provides a ligand contact to L-glutamine. The active-site Nucleophile; for glutamine hydrolysis is the Cys-381. Residues 382–385 (LGMQ), Glu-405, and Arg-462 contribute to the L-glutamine site. Residues His-507 and Glu-509 contribute to the active site. Positions 536–555 (PSEAFNPQSKIIEKKSLEQQ) are disordered. Over residues 546 to 555 (IIEKKSLEQQ) the composition is skewed to basic and acidic residues.

Belongs to the CTP synthase family. Homotetramer.

It catalyses the reaction UTP + L-glutamine + ATP + H2O = CTP + L-glutamate + ADP + phosphate + 2 H(+). The catalysed reaction is L-glutamine + H2O = L-glutamate + NH4(+). The enzyme catalyses UTP + NH4(+) + ATP = CTP + ADP + phosphate + 2 H(+). The protein operates within pyrimidine metabolism; CTP biosynthesis via de novo pathway; CTP from UDP: step 2/2. Its activity is regulated as follows. Allosterically activated by GTP, when glutamine is the substrate; GTP has no effect on the reaction when ammonia is the substrate. The allosteric effector GTP functions by stabilizing the protein conformation that binds the tetrahedral intermediate(s) formed during glutamine hydrolysis. Inhibited by the product CTP, via allosteric rather than competitive inhibition. Catalyzes the ATP-dependent amination of UTP to CTP with either L-glutamine or ammonia as the source of nitrogen. Regulates intracellular CTP levels through interactions with the four ribonucleotide triphosphates. The polypeptide is CTP synthase (Prochlorococcus marinus (strain NATL1A)).